The sequence spans 1363 residues: DNA-directed RNA polymerase subunit beta (1363 aa).

The protein belongs to the RNA polymerase beta chain family. As to quaternary structure, the RNAP catalytic core consists of 2 alpha, 1 beta, 1 beta' and 1 omega subunit. When a sigma factor is associated with the core the holoenzyme is formed, which can initiate transcription.

It carries out the reaction RNA(n) + a ribonucleoside 5'-triphosphate = RNA(n+1) + diphosphate. Its function is as follows. DNA-dependent RNA polymerase catalyzes the transcription of DNA into RNA using the four ribonucleoside triphosphates as substrates. This chain is DNA-directed RNA polymerase subunit beta, found in Pelagibacter ubique (strain HTCC1062).